The primary structure comprises 415 residues: Branched-chain-amino-acid aminotransferase, cytosolic (415 aa).

K244 is modified (N6-(pyridoxal phosphate)lysine).

This sequence belongs to the class-IV pyridoxal-phosphate-dependent aminotransferase family. The cofactor is pyridoxal 5'-phosphate.

The protein resides in the cytoplasm. It carries out the reaction L-leucine + 2-oxoglutarate = 4-methyl-2-oxopentanoate + L-glutamate. The enzyme catalyses L-isoleucine + 2-oxoglutarate = (S)-3-methyl-2-oxopentanoate + L-glutamate. It catalyses the reaction L-valine + 2-oxoglutarate = 3-methyl-2-oxobutanoate + L-glutamate. Its function is as follows. Catalyzes the first reaction in the catabolism of the essential branched chain amino acids leucine, isoleucine, and valine. This Caenorhabditis elegans protein is Branched-chain-amino-acid aminotransferase, cytosolic (bcat-1).